The primary structure comprises 177 residues: Large ribosomal subunit protein uL6 (177 aa).

The protein belongs to the universal ribosomal protein uL6 family. As to quaternary structure, part of the 50S ribosomal subunit.

In terms of biological role, this protein binds to the 23S rRNA, and is important in its secondary structure. It is located near the subunit interface in the base of the L7/L12 stalk, and near the tRNA binding site of the peptidyltransferase center. The chain is Large ribosomal subunit protein uL6 from Teredinibacter turnerae (strain ATCC 39867 / T7901).